Reading from the N-terminus, the 523-residue chain is 2-isopropylmalate synthase (523 aa).

Residues 5–267 (VIIFDTTLRD…ETGINAKEIH (263 aa)) form the Pyruvate carboxyltransferase domain. Mn(2+)-binding residues include aspartate 14, histidine 202, histidine 204, and asparagine 238. Residues 392-523 (KLQQLVVHSD…QQEKQVLGGV (132 aa)) form a regulatory domain region.

It belongs to the alpha-IPM synthase/homocitrate synthase family. LeuA type 1 subfamily. As to quaternary structure, homodimer. It depends on Mn(2+) as a cofactor.

It localises to the cytoplasm. It carries out the reaction 3-methyl-2-oxobutanoate + acetyl-CoA + H2O = (2S)-2-isopropylmalate + CoA + H(+). It functions in the pathway amino-acid biosynthesis; L-leucine biosynthesis; L-leucine from 3-methyl-2-oxobutanoate: step 1/4. In terms of biological role, catalyzes the condensation of the acetyl group of acetyl-CoA with 3-methyl-2-oxobutanoate (2-ketoisovalerate) to form 3-carboxy-3-hydroxy-4-methylpentanoate (2-isopropylmalate). The protein is 2-isopropylmalate synthase of Shewanella piezotolerans (strain WP3 / JCM 13877).